We begin with the raw amino-acid sequence, 367 residues long: Calcium uniporter protein, mitochondrial (367 aa).

The transit peptide at M1–L12 directs the protein to the mitochondrion. Topologically, residues L13–Q232 are mitochondrial matrix. The tract at residues K61 to D80 is disordered. A coiled-coil region spans residues R199–V233. The chain crosses the membrane as a helical span at residues V233 to F253. Residues G254–W262 are Mitochondrial intermembrane-facing. The chain crosses the membrane as a helical span at residues E263–A284. A Selectivity filter motif is present at residues W266–V276. E270 serves as a coordination point for Ca(2+). Topologically, residues Y285 to E367 are mitochondrial matrix.

This sequence belongs to the MCU (TC 1.A.77) family. Homotetramer. Component of the uniplex complex, composed of MCU, EMRE, MICU1 and MICU2 in a 4:4:1:1 stoichiometry.

It is found in the mitochondrion inner membrane. It catalyses the reaction Ca(2+)(in) = Ca(2+)(out). MCU channel activity is regulated by the heterodimer composed of MICU1 and MICU2, which act as calcium-sensors. At low calcium levels, MICU1 occludes the pore of the MCU channel, preventing mitochondrial calcium uptake. At higher calcium levels, calcium-binding to MICU1 and MICU2 induces a conformational change that weakens MCU-MICU1 interactions and moves the MICU1-MICU2 heterodimer away from the pore, allowing calcium permeation through the channel. Functionally, channel-forming and calcium-conducting subunit of the mitochondrial inner membrane calcium uniporter complex (uniplex), which mediates calcium uptake into the mitochondrial matrix. MCU channel activity is regulated by the calcium-sensor subunits of the uniplex MICU1 and MICU2. Mitochondrial calcium homeostasis plays key roles in cellular physiology and regulates ATP production, cytoplasmic calcium signals and activation of cell death pathways. The sequence is that of Calcium uniporter protein, mitochondrial from Tribolium castaneum (Red flour beetle).